A 312-amino-acid chain; its full sequence is Small ribosomal subunit protein RACK1 (312 aa).

WD repeat units follow at residues 9-42 (GHRGWVTSLACPQQAGSYIKVVSTSRDGTAISWK), 63-93 (GHTGFVSCVSLAHATDYALTASWDRSIRMWD), 105-135 (KHTKDVLAVAFSPDDRLIVSAGRDNVIRVWN), 148-180 (GHEDWVSSICFSPSLEHPIVVSGSWDNTIKVWN), 192-222 (GHSNYVSTVTVSPDGSLCASGGKDGAALLWD), 233-262 (NVESPINQIAFSPNRFWMCVATERSLSVYD), and 279-307 (PSECISIAWSADGNTLYSGHKDNLIRVWS).

This sequence belongs to the WD repeat G protein beta family. Ribosomal protein RACK1 subfamily.

The polypeptide is Small ribosomal subunit protein RACK1 (Leishmania chagasi).